Here is a 213-residue protein sequence, read N- to C-terminus: DELTA-actitoxin-Aas1a (213 aa).

The N-terminal stretch at 1-19 (MSRLIIAFIVVTMVCSAIA) is a signal peptide. A propeptide spanning residues 20 to 34 (LPKKKVEPLEKDEKR) is cleaved from the precursor. The interval 37 to 46 (AVAGAVIEGG) is plays an important role in the hemolytic activity. An N-terminal region region spans residues 45-64 (GGNLVMSVLDRILEAIGDVN). Phosphocholine contacts are provided by serine 88, valine 121, serine 139, proline 141, tyrosine 167, tyrosine 171, and tyrosine 172. The tract at residues 139–154 (SIPYDYNLYSNWWNVK) is trp-rich region, which is important for the binding to lipid membrane. Positions 178-180 (KGD) match the Cell attachment site, crucial for protein stability motif.

Belongs to the actinoporin family. Sea anemone subfamily. As to quaternary structure, octamer or nonamer in membranes. Monomer in the soluble state.

The protein localises to the secreted. Its subcellular location is the nematocyst. It is found in the target cell membrane. Pore-forming protein that forms cation-selective hydrophilic pores of around 1 nm and causes cytolysis. Pore formation is a multi-step process that involves specific recognition of membrane sphingomyelin (but neither cholesterol nor phosphatidylcholine) using aromatic rich region and adjacent phosphocholine (POC) binding site, firm binding to the membrane (mainly driven by hydrophobic interactions) accompanied by the transfer of the N-terminal region to the lipid-water interface and finally pore formation after oligomerization of monomers. This protein shows potent hemolytic activity (EC(50)=8.8 ng/ml) that is specifically inhibited by sphingomyelin. Shows no phospholipase A2 activity, nor antimicrobial activity against the four bacteria tested. Is lethal to crayfish. This is DELTA-actitoxin-Aas1a from Anthopleura asiatica (Sea anemone).